The following is a 488-amino-acid chain: Glutamyl-tRNA(Gln) amidotransferase subunit A (488 aa).

Active-site charge relay system residues include Lys77 and Ser152. The active-site Acyl-ester intermediate is the Ser176.

Belongs to the amidase family. GatA subfamily. As to quaternary structure, heterotrimer of A, B and C subunits.

It carries out the reaction L-glutamyl-tRNA(Gln) + L-glutamine + ATP + H2O = L-glutaminyl-tRNA(Gln) + L-glutamate + ADP + phosphate + H(+). Allows the formation of correctly charged Gln-tRNA(Gln) through the transamidation of misacylated Glu-tRNA(Gln) in organisms which lack glutaminyl-tRNA synthetase. The reaction takes place in the presence of glutamine and ATP through an activated gamma-phospho-Glu-tRNA(Gln). The polypeptide is Glutamyl-tRNA(Gln) amidotransferase subunit A (Streptococcus equi subsp. zooepidemicus (strain H70)).